The following is a 338-amino-acid chain: MESENILEAKQVSVAFRIAGKFQKAIYDIDLSLRRGEVLAIVGESGSGKSTFATAVMGLHNPNQTQITGSILLDEEEVIGKTGDSMASIRGSKVGMIFQNPLTALNPLMKIGQQIKEMLAVHDVYPENQYESRIFQLLEQVGIPNPKRVVNQFPHQLSGGMRQRVMIAIAIANDPDLIIADEPTTALDVTIQAQILDLILEIQKKKNAGVILITHDLGVVAEVADTVAVMYAGQLVEKASVEELFQNPKHPYTRSLLRSNPSAETVSDDLYVIPGSVPSLSEIEYDKDLFLARVPWMKEEAQKVISEKMTEISSNHFVRGQAWKKFEFPDQKLKGGKK.

The ABC transporter domain occupies 7–257 (LEAKQVSVAF…PKHPYTRSLL (251 aa)). An ATP-binding site is contributed by 43-50 (GESGSGKS).

This sequence belongs to the ABC transporter superfamily. As to quaternary structure, the complex is composed of two ATP-binding proteins (OppD and OppF), two transmembrane proteins (OppB and OppC) and a solute-binding protein (OppA).

It localises to the cell membrane. It catalyses the reaction a [peptide](out) + ATP + H2O = a [peptide](in) + ADP + phosphate + H(+). Functionally, part of the ABC transporter complex OppABCDF involved in the uptake of oligopeptides. Probably responsible for energy coupling to the transport system. Essential for uptake of peptides larger than three amino acids and for growth in milk. This Lactococcus lactis subsp. lactis (strain IL1403) (Streptococcus lactis) protein is Oligopeptide transport ATP-binding protein OppD (oppD).